Here is a 432-residue protein sequence, read N- to C-terminus: Short/branched chain specific acyl-CoA dehydrogenase, mitochondrial (432 aa).

Residues 1–33 (MEGLAVRLLRGSRLLRRNFLTCLSSWKIPPHVS) constitute a mitochondrion transit peptide. Position 70 is an N6-acetyllysine; alternate (K70). An N6-succinyllysine; alternate modification is found at K70. FAD is bound by residues 174–183 (FCLSEAGAGS) and 207–209 (WIS). Substrate is bound at residue S183. S183 bears the Phosphoserine mark. Substrate-binding residues include Y229 and Y283. N6-acetyllysine; alternate is present on K284. At K284 the chain carries N6-succinyllysine; alternate. 291 to 294 (NEGR) serves as a coordination point for substrate. FAD-binding positions include R319, Q330, and 387 to 391 (EWMGG). Residue E414 is the Proton acceptor of the active site. 416 to 418 (ASN) is an FAD binding site. N6-acetyllysine is present on K426.

Belongs to the acyl-CoA dehydrogenase family. As to quaternary structure, homotetramer. FAD serves as cofactor. Ubiquitously expressed.

It is found in the mitochondrion matrix. The enzyme catalyses 2-methylbutanoyl-CoA + oxidized [electron-transfer flavoprotein] + H(+) = (2E)-2-methylbut-2-enoyl-CoA + reduced [electron-transfer flavoprotein]. It carries out the reaction (2S)-2-methylbutanoyl-CoA + oxidized [electron-transfer flavoprotein] + H(+) = (2E)-2-methylbut-2-enoyl-CoA + reduced [electron-transfer flavoprotein]. The catalysed reaction is (2R)-2-methylbutanoyl-CoA + oxidized [electron-transfer flavoprotein] + H(+) = ethylacryloyl-CoA + reduced [electron-transfer flavoprotein]. It catalyses the reaction butanoyl-CoA + oxidized [electron-transfer flavoprotein] + H(+) = (2E)-butenoyl-CoA + reduced [electron-transfer flavoprotein]. The enzyme catalyses 2-methylpropanoyl-CoA + oxidized [electron-transfer flavoprotein] + H(+) = 2-methylpropenoyl-CoA + reduced [electron-transfer flavoprotein]. It carries out the reaction hexanoyl-CoA + oxidized [electron-transfer flavoprotein] + H(+) = (2E)-hexenoyl-CoA + reduced [electron-transfer flavoprotein]. The catalysed reaction is 2-methylhexanoyl-CoA + oxidized [electron-transfer flavoprotein] + H(+) = 2-methylhexenoyl-CoA + reduced [electron-transfer flavoprotein]. It catalyses the reaction valproyl-CoA + oxidized [electron-transfer flavoprotein] + H(+) = (2E)-2-propylpent-2-enoyl-CoA + reduced [electron-transfer flavoprotein]. The protein operates within lipid metabolism; mitochondrial fatty acid beta-oxidation. Its pathway is amino-acid degradation; L-isoleucine degradation. Its activity is regulated as follows. Competitively inhibited by valproyl-CoA. Its function is as follows. Short and branched chain specific acyl-CoA dehydrogenase that catalyzes the removal of one hydrogen from C-2 and C-3 of the fatty acyl-CoA thioester, resulting in the formation of trans-2-enoyl-CoA. Among the different mitochondrial acyl-CoA dehydrogenases, acts specifically on short and branched chain acyl-CoA derivatives such as (S)-2-methylbutyryl-CoA as well as short straight chain acyl-CoAs such as butyryl-CoA. Plays an important role in the metabolism of L-isoleucine by catalyzing the dehydrogenation of 2-methylbutyryl-CoA, one of the steps of the L-isoleucine catabolic pathway. Can also act on valproyl-CoA, a metabolite of valproic acid, an antiepileptic drug. This chain is Short/branched chain specific acyl-CoA dehydrogenase, mitochondrial, found in Homo sapiens (Human).